A 229-amino-acid chain; its full sequence is Cytidylate kinase (229 aa).

An ATP-binding site is contributed by 10-18 (GHSSSGKST).

Belongs to the cytidylate kinase family. Type 1 subfamily.

The protein localises to the cytoplasm. It catalyses the reaction CMP + ATP = CDP + ADP. The catalysed reaction is dCMP + ATP = dCDP + ADP. This Parabacteroides distasonis (strain ATCC 8503 / DSM 20701 / CIP 104284 / JCM 5825 / NCTC 11152) protein is Cytidylate kinase.